A 78-amino-acid chain; its full sequence is Short neurotoxin SNTX14 (78 aa).

The first 21 residues, Met1–Thr21, serve as a signal peptide directing secretion. Disulfide bonds link Cys24–Cys40, Cys33–Cys58, Cys62–Cys70, and Cys71–Cys76.

It belongs to the three-finger toxin family. Short-chain subfamily. As to expression, expressed by the venom gland.

It localises to the secreted. This three-finger toxin binds and inhibits the nicotinic acetylcholine receptor (nAChR). The sequence is that of Short neurotoxin SNTX14 from Ophiophagus hannah (King cobra).